We begin with the raw amino-acid sequence, 417 residues long: Serine hydroxymethyltransferase (417 aa).

(6S)-5,6,7,8-tetrahydrofolate-binding positions include leucine 121 and 125–127; that span reads GHL. Lysine 229 is subject to N6-(pyridoxal phosphate)lysine. 355–357 provides a ligand contact to (6S)-5,6,7,8-tetrahydrofolate; the sequence is SPF.

Belongs to the SHMT family. In terms of assembly, homodimer. The cofactor is pyridoxal 5'-phosphate.

The protein localises to the cytoplasm. It carries out the reaction (6R)-5,10-methylene-5,6,7,8-tetrahydrofolate + glycine + H2O = (6S)-5,6,7,8-tetrahydrofolate + L-serine. Its pathway is one-carbon metabolism; tetrahydrofolate interconversion. It participates in amino-acid biosynthesis; glycine biosynthesis; glycine from L-serine: step 1/1. Its function is as follows. Catalyzes the reversible interconversion of serine and glycine with tetrahydrofolate (THF) serving as the one-carbon carrier. This reaction serves as the major source of one-carbon groups required for the biosynthesis of purines, thymidylate, methionine, and other important biomolecules. Also exhibits THF-independent aldolase activity toward beta-hydroxyamino acids, producing glycine and aldehydes, via a retro-aldol mechanism. This chain is Serine hydroxymethyltransferase, found in Xylella fastidiosa (strain 9a5c).